Here is a 162-residue protein sequence, read N- to C-terminus: MRRCSLIATIVELVTAVIEPAITAPFELVDVEYGKIGSDYVLSVFVDKPEGITVNDTADLTDIISPLLDTIKPDPFPEQYFLEVTSPGLERPLKTKEQVEAAVGQYIHVGLYKSLDKQKVFEGTLLQFKEDVLTLEYMDKTRKKEIDIPYSLVSKARLAVKF.

Belongs to the RimP family.

It is found in the cytoplasm. Functionally, required for maturation of 30S ribosomal subunits. In Streptococcus gordonii (strain Challis / ATCC 35105 / BCRC 15272 / CH1 / DL1 / V288), this protein is Ribosome maturation factor RimP.